A 367-amino-acid polypeptide reads, in one-letter code: Peptide chain release factor 2 (367 aa).

Q254 is subject to N5-methylglutamine.

Belongs to the prokaryotic/mitochondrial release factor family. In terms of processing, methylated by PrmC. Methylation increases the termination efficiency of RF2.

The protein resides in the cytoplasm. In terms of biological role, peptide chain release factor 2 directs the termination of translation in response to the peptide chain termination codons UGA and UAA. In Neisseria gonorrhoeae (strain ATCC 700825 / FA 1090), this protein is Peptide chain release factor 2.